Reading from the N-terminus, the 36-residue chain is Photosystem I reaction center subunit VIII (36 aa).

Residues 8 to 28 (SVLVPLVGLVFPAIAMASLFL) form a helical membrane-spanning segment.

It belongs to the PsaI family.

Its subcellular location is the plastid. The protein resides in the chloroplast thylakoid membrane. May help in the organization of the PsaL subunit. The protein is Photosystem I reaction center subunit VIII of Helianthus annuus (Common sunflower).